Here is a 334-residue protein sequence, read N- to C-terminus: MEQTTLLRLAGAGLTALAGALALGPVVIPLMRRLRAGQTIRAEMSARHQAKAGTPTMGGVIFIIPAILATLIFAPRSGDALPRLIIALVLTVGHGLVGFADDYIKVVLKRSLGLRARDKLLAQVGLAAVLGYGAVEVLGLGTAVTLPVLNLTLELGRPLYYLLVLIMVWGTASAVNFADGLDGLLGGLSVITFSFYGLVVALALGQTDMAVLGTALVGGVLGFLHYNRHPARIFMGDVGSFALGGALAALAVLTKTEFLLVIVGAVYVIEVISVILQVLSFRLTGRRIFKMAPLHHHFELLGWSEGQVLRLFWGAGLLFTLLGWLVLPGMLAGR.

10 consecutive transmembrane segments (helical) span residues 11–31, 55–75, 84–104, 124–144, 158–178, 184–204, 205–225, 233–253, 258–278, and 311–331; these read GAGL…IPLM, PTMG…IFAP, LIIA…DDYI, VGLA…GTAV, PLYY…VNFA, LLGG…ALAL, GQTD…GFLH, IFMG…LAVL, FLLV…ILQV, and LFWG…PGML.

Belongs to the glycosyltransferase 4 family. MraY subfamily. Requires Mg(2+) as cofactor.

It localises to the cell membrane. The enzyme catalyses UDP-N-acetyl-alpha-D-muramoyl-L-alanyl-gamma-D-glutamyl-meso-2,6-diaminopimeloyl-D-alanyl-D-alanine + di-trans,octa-cis-undecaprenyl phosphate = di-trans,octa-cis-undecaprenyl diphospho-N-acetyl-alpha-D-muramoyl-L-alanyl-D-glutamyl-meso-2,6-diaminopimeloyl-D-alanyl-D-alanine + UMP. Its pathway is cell wall biogenesis; peptidoglycan biosynthesis. Functionally, catalyzes the initial step of the lipid cycle reactions in the biosynthesis of the cell wall peptidoglycan: transfers peptidoglycan precursor phospho-MurNAc-pentapeptide from UDP-MurNAc-pentapeptide onto the lipid carrier undecaprenyl phosphate, yielding undecaprenyl-pyrophosphoryl-MurNAc-pentapeptide, known as lipid I. This is Phospho-N-acetylmuramoyl-pentapeptide-transferase from Symbiobacterium thermophilum (strain DSM 24528 / JCM 14929 / IAM 14863 / T).